A 188-amino-acid polypeptide reads, in one-letter code: Elongation factor P (188 aa).

The protein belongs to the elongation factor P family.

Its subcellular location is the cytoplasm. It functions in the pathway protein biosynthesis; polypeptide chain elongation. Functionally, involved in peptide bond synthesis. Stimulates efficient translation and peptide-bond synthesis on native or reconstituted 70S ribosomes in vitro. Probably functions indirectly by altering the affinity of the ribosome for aminoacyl-tRNA, thus increasing their reactivity as acceptors for peptidyl transferase. This Phocaeicola vulgatus (strain ATCC 8482 / DSM 1447 / JCM 5826 / CCUG 4940 / NBRC 14291 / NCTC 11154) (Bacteroides vulgatus) protein is Elongation factor P.